A 125-amino-acid chain; its full sequence is Holo-[acyl-carrier-protein] synthase (125 aa).

Mg(2+) is bound by residues Asp8 and Glu57.

This sequence belongs to the P-Pant transferase superfamily. AcpS family. Mg(2+) is required as a cofactor.

Its subcellular location is the cytoplasm. It carries out the reaction apo-[ACP] + CoA = holo-[ACP] + adenosine 3',5'-bisphosphate + H(+). Its function is as follows. Transfers the 4'-phosphopantetheine moiety from coenzyme A to a Ser of acyl-carrier-protein. This Neisseria meningitidis serogroup A / serotype 4A (strain DSM 15465 / Z2491) protein is Holo-[acyl-carrier-protein] synthase.